A 78-amino-acid polypeptide reads, in one-letter code: 4-methyl-3-hydroxyanthranilic acid carrier protein (78 aa).

O-(pantetheine 4'-phosphoryl)serine is present on S33.

It belongs to the acyl carrier protein (ACP) family. 4'-phosphopantetheine is transferred from CoA to a specific serine of the apo-form of this carrier protein.

Its pathway is antibiotic biosynthesis. In terms of biological role, involved in the biosynthesis of actinomycin. Acts as a carrier in the transfer and thioesterification of 4-methyl-3-hydroxyanthranilic acid (4-MHA). The sequence is that of 4-methyl-3-hydroxyanthranilic acid carrier protein from Streptomyces anulatus (Streptomyces chrysomallus).